The following is a 155-amino-acid chain: Small ribosomal subunit protein bS6 (155 aa).

The segment at 94 to 155 is disordered; that stretch reads EEHETEPSAM…RDDNSDGGQE (62 aa). Residues 107–149 show a composition bias toward basic and acidic residues; that stretch reads RGDRGDRGDRRGGDRFGDRDRGDRGDRGSSRFGDRERPRRDDN.

Belongs to the bacterial ribosomal protein bS6 family.

Functionally, binds together with bS18 to 16S ribosomal RNA. This chain is Small ribosomal subunit protein bS6, found in Parvibaculum lavamentivorans (strain DS-1 / DSM 13023 / NCIMB 13966).